Consider the following 248-residue polypeptide: 1-(5-phosphoribosyl)-5-[(5-phosphoribosylamino)methylideneamino] imidazole-4-carboxamide isomerase (248 aa).

D8 functions as the Proton acceptor in the catalytic mechanism. The active-site Proton donor is the D129.

Belongs to the HisA/HisF family.

The protein localises to the cytoplasm. It carries out the reaction 1-(5-phospho-beta-D-ribosyl)-5-[(5-phospho-beta-D-ribosylamino)methylideneamino]imidazole-4-carboxamide = 5-[(5-phospho-1-deoxy-D-ribulos-1-ylimino)methylamino]-1-(5-phospho-beta-D-ribosyl)imidazole-4-carboxamide. Its pathway is amino-acid biosynthesis; L-histidine biosynthesis; L-histidine from 5-phospho-alpha-D-ribose 1-diphosphate: step 4/9. This is 1-(5-phosphoribosyl)-5-[(5-phosphoribosylamino)methylideneamino] imidazole-4-carboxamide isomerase from Rhizobium leguminosarum bv. trifolii (strain WSM2304).